A 216-amino-acid chain; its full sequence is Pyrophosphatase PpaX (216 aa).

The Nucleophile role is filled by aspartate 12.

Belongs to the HAD-like hydrolase superfamily. PpaX family. The cofactor is Mg(2+).

It catalyses the reaction diphosphate + H2O = 2 phosphate + H(+). Its function is as follows. Hydrolyzes pyrophosphate formed during P-Ser-HPr dephosphorylation by HPrK/P. Might play a role in controlling the intracellular pyrophosphate pool. In Bacillus pumilus (strain SAFR-032), this protein is Pyrophosphatase PpaX.